The chain runs to 160 residues: Transcriptional repressor NrdR (160 aa).

The segment at 3–34 is a zinc-finger region; the sequence is CPFCGAEDTSVVDSRVSEEGSRIRRRRQCTAC. The 91-residue stretch at 49 to 139 folds into the ATP-cone domain; that stretch reads PQIIKQGGNR…VYRSFEDVGD (91 aa).

This sequence belongs to the NrdR family. It depends on Zn(2+) as a cofactor.

Functionally, negatively regulates transcription of bacterial ribonucleotide reductase nrd genes and operons by binding to NrdR-boxes. This is Transcriptional repressor NrdR from Nitrosomonas eutropha (strain DSM 101675 / C91 / Nm57).